Reading from the N-terminus, the 250-residue chain is Ribonuclease PH (250 aa).

Phosphate contacts are provided by residues R86 and 124–126; that span reads GTR.

This sequence belongs to the RNase PH family. In terms of assembly, homohexameric ring arranged as a trimer of dimers.

It carries out the reaction tRNA(n+1) + phosphate = tRNA(n) + a ribonucleoside 5'-diphosphate. Functionally, phosphorolytic 3'-5' exoribonuclease that plays an important role in tRNA 3'-end maturation. Removes nucleotide residues following the 3'-CCA terminus of tRNAs; can also add nucleotides to the ends of RNA molecules by using nucleoside diphosphates as substrates, but this may not be physiologically important. Probably plays a role in initiation of 16S rRNA degradation (leading to ribosome degradation) during starvation. This Shouchella clausii (strain KSM-K16) (Alkalihalobacillus clausii) protein is Ribonuclease PH.